A 353-amino-acid chain; its full sequence is Probable D-xylulose reductase A (353 aa).

C42, H67, and E68 together coordinate Zn(2+). 177-182 (GAGPVG) provides a ligand contact to NAD(+).

This sequence belongs to the zinc-containing alcohol dehydrogenase family. Zn(2+) is required as a cofactor.

It catalyses the reaction xylitol + NAD(+) = D-xylulose + NADH + H(+). It participates in carbohydrate degradation; L-arabinose degradation via L-arabinitol; D-xylulose 5-phosphate from L-arabinose (fungal route): step 4/5. Functionally, xylitol dehydrogenase which catalyzes the conversion of xylitol to D-xylulose. Xylose is a major component of hemicelluloses such as xylan. Most fungi utilize D-xylose via three enzymatic reactions, xylose reductase (XR), xylitol dehydrogenase (XDH), and xylulokinase, to form xylulose 5-phosphate, which enters pentose phosphate pathway. This is Probable D-xylulose reductase A (xdhA) from Aspergillus terreus (strain NIH 2624 / FGSC A1156).